A 1194-amino-acid polypeptide reads, in one-letter code: IQ motif and SEC7 domain-containing protein 3 (1194 aa).

Residues 20-56 (AIVQNQQSLIHTQRQRIDELERRLDELSAENRSLWEH) are a coiled coil. 2 disordered regions span residues 62–149 (AQPP…EKER) and 229–272 (GRPS…QQPA). Residues 63-78 (QPPPGLVPPPSAPLPA) show a composition bias toward pro residues. The span at 79 to 92 (PAATAPAATAAQEP) shows a compositional bias: low complexity. Residues 122–133 (PSSRVQTPQSPH) are compositionally biased toward polar residues. Ser-255 carries the phosphoserine modification. Residues 311–340 (SRRAACTIQTAFRQYQLSKNFEKIRNSLLE) form the IQ domain. Disordered stretches follow at residues 439 to 471 (SAGQ…QGHS) and 515 to 610 (PAAV…KSAK). Composition is skewed to low complexity over residues 561-572 (VAEAVVEEAVAT) and 600-610 (SSSSASTKSAK). The region spanning 646–839 (TLSTDTLRKR…VGIYERIQQK (194 aa)) is the SEC7 domain. A PH domain is found at 852–985 (TKVEKSIVGM…LKESIAEVTE (134 aa)). Disordered stretches follow at residues 1002–1099 (KTLS…PTPP) and 1137–1175 (SSDS…HQFC). Residues 1024-1035 (AKREAMAGEKAT) show a composition bias toward basic and acidic residues. Positions 1036–1052 (ESSGEVSIHNRLQTFQH) are enriched in polar residues. Composition is skewed to pro residues over residues 1064–1099 (APSP…PTPP) and 1159–1169 (PPLPPPPPPYN).

Belongs to the BRAG family. As to quaternary structure, interacts with DLG1 and DLG4. Interacts with GPHN. In terms of tissue distribution, expressed in brain. Localized to dendrites, as well as somas of neuronal cells.

The protein localises to the cytoplasm. It localises to the postsynaptic density. Functionally, acts as a guanine nucleotide exchange factor (GEF) for ARF1. This is IQ motif and SEC7 domain-containing protein 3 (Iqsec3) from Rattus norvegicus (Rat).